The following is a 317-amino-acid chain: Melanocyte-stimulating hormone receptor (317 aa).

At 1–37 (MPMQGAQRRLLGSLNSTPTATPNLGLAANHTGAPCLE) the chain is on the extracellular side. N-linked (GlcNAc...) asparagine glycosylation occurs at asparagine 29. The helical transmembrane segment at 38 to 63 (VSIPDGLFLSLGLVSLVENVLVVAAI) threads the bilayer. Over 64-72 (AKNRNLHSP) the chain is Cytoplasmic. The chain crosses the membrane as a helical span at residues 73 to 93 (MYCFICCLALSDLLVSGSNML). Residues 94 to 118 (EMAVILLLEAGALATRASVVQQLQN) lie on the Extracellular side of the membrane. Residues 119 to 140 (TIDVLTCSSMLCSLCFLGAIAV) form a helical membrane-spanning segment. Residues 141-163 (DRYVSIFYALRYHSIVTLPRARR) lie on the Cytoplasmic side of the membrane. Residues 164-183 (AIAAIWVASVLSSTLFIAYC) form a helical membrane-spanning segment. At 184 to 191 (DHAAVLLC) the chain is on the extracellular side. A helical membrane pass occupies residues 192–211 (LVVFFLAMLVLMAVLYVHML). Residues 212–240 (ARACQHAQGITRLHKRQLPAHQGFGLRGA) are Cytoplasmic-facing. The chain crosses the membrane as a helical span at residues 241–266 (ATLTILLGIFFVCWGPFFLHLMLVVL). The Extracellular segment spans residues 267–279 (CPQHLTCSCIFKN). The chain crosses the membrane as a helical span at residues 280 to 300 (FKVFLTLIICNTIIDPLIYAF). Over 301–317 (RSQELCRTLKEVLLCSW) the chain is Cytoplasmic. Cysteine 315 is lipidated: S-palmitoyl cysteine.

This sequence belongs to the G-protein coupled receptor 1 family. Interacts with MGRN1, but does not undergo MGRN1-mediated ubiquitination; this interaction competes with GNAS-binding and thus inhibits agonist-induced cAMP production. Interacts with OPN3; the interaction results in a decrease in MC1R-mediated cAMP signaling and ultimately a decrease in melanin production in melanocytes.

It localises to the cell membrane. In terms of biological role, receptor for MSH (alpha, beta and gamma) and ACTH. The activity of this receptor is mediated by G proteins which activate adenylate cyclase. Mediates melanogenesis, the production of eumelanin (black/brown) and phaeomelanin (red/yellow), via regulation of cAMP signaling in melanocytes. The chain is Melanocyte-stimulating hormone receptor (MC1R) from Alouatta sara (Bolivian red howler monkey).